The primary structure comprises 235 residues: MLVAVEIFGFFLTAVGLLMLGVTLAHSSWRVSTVHGNVITTNTIFENLWYSCATDSMGVHNCWEFPSMLALSGYIQACRALMITAILLGFLGLFLGMVGLRCTNIGGLELSRKTKLAATAGALHILAGICGMVAVSWYAFNITRDFFNPLYAGTKYELGPALYLGWSACLLAILGGICLFSNCCCSRDRDPATGVQLPYKAPVIPAASLAARLPAAASDEEGDSSFGKYGKNAYV.

Residue Met1 is a topological domain, cytoplasmic. The helical transmembrane segment at 2–24 (LVAVEIFGFFLTAVGLLMLGVTL) threads the bilayer. Residues 25 to 74 (AHSSWRVSTVHGNVITTNTIFENLWYSCATDSMGVHNCWEFPSMLALSGY) are Extracellular-facing. Cys52 and Cys62 form a disulfide bridge. The helical transmembrane segment at 75-99 (IQACRALMITAILLGFLGLFLGMVG) threads the bilayer. Topologically, residues 100 to 115 (LRCTNIGGLELSRKTK) are cytoplasmic. A Phosphoserine modification is found at Ser111. Residues 116-140 (LAATAGALHILAGICGMVAVSWYAF) traverse the membrane as a helical segment. Residues 141-159 (NITRDFFNPLYAGTKYELG) are Extracellular-facing. Positions 146-147 (FF) are important for the formation of tight-junction strand-like structures. The helical transmembrane segment at 160-182 (PALYLGWSACLLAILGGICLFSN) threads the bilayer. Topologically, residues 183–235 (CCCSRDRDPATGVQLPYKAPVIPAASLAARLPAAASDEEGDSSFGKYGKNAYV) are cytoplasmic. A phosphoserine mark is found at Ser218 and Ser225.

The protein belongs to the claudin family. Can form homo- and heteropolymeric tight junction strands. Post-translationally, palmitoylated.

It localises to the cell junction. The protein localises to the tight junction. Its subcellular location is the cell membrane. The catalysed reaction is Na(+)(in) = Na(+)(out). The enzyme catalyses K(+)(in) = K(+)(out). It catalyses the reaction Cs(+)(in) = Cs(+)(out). It carries out the reaction Rb(+)(in) = Rb(+)(out). The catalysed reaction is Li(+)(in) = Li(+)(out). The enzyme catalyses NH4(+)(in) = NH4(+)(out). It catalyses the reaction methylamine(out) = methylamine(in). It carries out the reaction H2O(in) = H2O(out). Functionally, forms paracellular channels: polymerizes in tight junction strands with cation- and water-selective channels through the strands, conveying epithelial permeability in a process known as paracellular tight junction permeability. In intestinal epithelium, allows for sodium and water fluxes from the peritoneal side to the lumen of the intestine to regulate nutrient absorption and intestinal morphogenesis. The protein is Claudin-15 (CLDN15) of Bos taurus (Bovine).